The chain runs to 216 residues: Kynurenine formamidase (216 aa).

W25 serves as a coordination point for substrate. Positions 55, 59, and 61 each coordinate Zn(2+). Residue H65 is the Proton donor/acceptor of the active site. Residues H167 and E179 each contribute to the Zn(2+) site.

It belongs to the Cyclase 1 superfamily. KynB family. As to quaternary structure, homodimer. It depends on Zn(2+) as a cofactor.

The enzyme catalyses N-formyl-L-kynurenine + H2O = L-kynurenine + formate + H(+). It functions in the pathway amino-acid degradation; L-tryptophan degradation via kynurenine pathway; L-kynurenine from L-tryptophan: step 2/2. In terms of biological role, catalyzes the hydrolysis of N-formyl-L-kynurenine to L-kynurenine, the second step in the kynurenine pathway of tryptophan degradation. This Cupriavidus necator (strain ATCC 17699 / DSM 428 / KCTC 22496 / NCIMB 10442 / H16 / Stanier 337) (Ralstonia eutropha) protein is Kynurenine formamidase.